Here is a 348-residue protein sequence, read N- to C-terminus: Succinylglutamate desuccinylase (348 aa).

Positions 64, 67, and 164 each coordinate Zn(2+). The active site involves Glu-228.

The protein belongs to the AspA/AstE family. Succinylglutamate desuccinylase subfamily. Requires Zn(2+) as cofactor.

The catalysed reaction is N-succinyl-L-glutamate + H2O = L-glutamate + succinate. The protein operates within amino-acid degradation; L-arginine degradation via AST pathway; L-glutamate and succinate from L-arginine: step 5/5. Transforms N(2)-succinylglutamate into succinate and glutamate. In Shewanella amazonensis (strain ATCC BAA-1098 / SB2B), this protein is Succinylglutamate desuccinylase.